The sequence spans 1576 residues: Disco-interacting protein 2 homolog B (1576 aa).

Phosphoserine occurs at positions 9, 50, and 53. The 120-residue stretch at 12–131 folds into the DMAP1-binding domain; it reads AVAALPPEVR…PMPTKRRSTF (120 aa). A disordered region spans residues 31–167; the sequence is LSEGDITQKG…AALSAALQQS (137 aa). Positions 52–62 are enriched in polar residues; that stretch reads YSPQTQETDSA. Positions 70-83 are enriched in low complexity; it reads QTPAPSAAQTSAPS. Residue Thr-71 is modified to Phosphothreonine. Residues 92–104 show a composition bias toward basic and acidic residues; sequence GARDERYRSDIHT. Residue Ser-100 is modified to Phosphoserine. Residue Thr-140 is modified to Phosphothreonine. Residues Ser-146, Ser-148, and Ser-153 each carry the phosphoserine modification. Residues 155-167 are compositionally biased toward low complexity; sequence RRQAALSAALQQS. Phosphoserine occurs at positions 178, 193, and 203. Residues 179–201 are disordered; that stretch reads IQGSSTSSSASSTLSHGEVKGTS. A compositionally biased stretch (low complexity) spans 182 to 193; the sequence is SSTSSSASSTLS. Residues 217-246 form a disordered region; sequence SAPPDVTTTTSSSSSSSSIRPANIDLPPSG. Low complexity predominate over residues 223-234; it reads TTTTSSSSSSSS. Ser-259 is modified (phosphoserine).

Belongs to the DIP2 family. In terms of assembly, interacts with alpha-tubulin. As to expression, moderately expressed in adult brain, placenta, skeletal muscle, heart, kidney, pancreas, lung, spleen and colon. Expression was weaker in adult liver, kidney, spleen, and ovary, and in fetal brain and liver. In the brain, it is expressed in the cerebral cortex; the frontal, parietal, occipital and temporal lobes; the paracentral gyrus; the pons; the corpus callosum and the hippocampus. Highest expression levels in the brain were found in the cerebral cortex and the frontal and parietal lobes.

Its subcellular location is the cell projection. It is found in the dendrite. The protein resides in the axon. It localises to the perikaryon. Negatively regulates axonal outgrowth and is essential for normal synaptic transmission. Not required for regulation of axon polarity. Promotes acetylation of alpha-tubulin. The protein is Disco-interacting protein 2 homolog B (DIP2B) of Homo sapiens (Human).